A 314-amino-acid chain; its full sequence is Mitochondrial translation factor 2 (314 aa).

Residues 111–136 (ENSSNIYDPSSPPDSPRKQQTHLGTI) form a disordered region.

In terms of assembly, component of the MRH5C complex, composed of mrh5, ppr4, mtf2, and sls1. Proteins mtf2 and sls1 form a subcomplex that serves as a scaffold to bring mrh5 and ppr4 together. The MRH5C complex associates with the small subunit of the mitochondrial ribosome.

Functionally, translation activation factor that as part of the MRH5C complex specifically recruits cox1 mRNA to the mitochondrial ribosome for translation initiation. This chain is Mitochondrial translation factor 2, found in Schizosaccharomyces pombe (strain 972 / ATCC 24843) (Fission yeast).